The chain runs to 282 residues: Shikimate dehydrogenase (NADP(+)) (282 aa).

Shikimate is bound by residues 18 to 20 (SRS) and T65. Catalysis depends on K69, which acts as the Proton acceptor. An NADP(+)-binding site is contributed by E81. Positions 90 and 105 each coordinate shikimate. Residues 130 to 134 (GAGGA), 154 to 159 (NRTPAR), and M222 each bind NADP(+). Y224 provides a ligand contact to shikimate. G245 contacts NADP(+).

This sequence belongs to the shikimate dehydrogenase family. As to quaternary structure, homodimer.

It catalyses the reaction shikimate + NADP(+) = 3-dehydroshikimate + NADPH + H(+). It participates in metabolic intermediate biosynthesis; chorismate biosynthesis; chorismate from D-erythrose 4-phosphate and phosphoenolpyruvate: step 4/7. In terms of biological role, involved in the biosynthesis of the chorismate, which leads to the biosynthesis of aromatic amino acids. Catalyzes the reversible NADPH linked reduction of 3-dehydroshikimate (DHSA) to yield shikimate (SA). In Acidovorax ebreus (strain TPSY) (Diaphorobacter sp. (strain TPSY)), this protein is Shikimate dehydrogenase (NADP(+)).